The primary structure comprises 880 residues: DNA mismatch repair protein MutS (880 aa).

An ATP-binding site is contributed by 625 to 632; sequence GPNMAGKS.

It belongs to the DNA mismatch repair MutS family.

This protein is involved in the repair of mismatches in DNA. It is possible that it carries out the mismatch recognition step. This protein has a weak ATPase activity. This Alkaliphilus oremlandii (strain OhILAs) (Clostridium oremlandii (strain OhILAs)) protein is DNA mismatch repair protein MutS.